We begin with the raw amino-acid sequence, 360 residues long: MDIGIFIPIGNNGWLISSNAPQYMPTFELNKQIVQTAEGYGFDFALSMIKLRGFGGKTEFWEHNLESFTLMAGLAAVTSKIQLFATVATLTIPPAIAARMASTIDSISNGRFGINLVTGWQKPEYEQMGLWPGDEFFHTRYEYLAEYAQVLRDLWATGSSDFKGEHFSMQDCRVSPRPKADMKLICAGQSEAGMAFSAQYADYNFCFGKGVNTPTAFAPTAQKLIEANEKTGRNVTSCVLFMIIADDTDEAARARWEHIKDGADEEAIAWLSEKGSADKSAGSNLRQMADPTSAVNINMGTLVGSWATVARMLDEVASVPGTQGVMLTFDDFVKGVEDFGEKIQPLMTSRKHIAQLKEVV.

FMN-binding positions include 49–50, Asn-115, Glu-124, 140–141, and Ser-190; these read IK and RY.

Belongs to the NtaA/SnaA/DszA monooxygenase family. RutA subfamily.

The catalysed reaction is uracil + FMNH2 + NADH + O2 = (Z)-3-ureidoacrylate + FMN + NAD(+) + H2O + H(+). The enzyme catalyses thymine + FMNH2 + NADH + O2 = (Z)-2-methylureidoacrylate + FMN + NAD(+) + H2O + H(+). Functionally, catalyzes the pyrimidine ring opening between N-3 and C-4 by an unusual flavin hydroperoxide-catalyzed mechanism, adding oxygen atoms in the process to yield ureidoacrylate peracid, that immediately reacts with FMN forming ureidoacrylate and FMN-N(5)-oxide. The FMN-N(5)-oxide reacts spontaneously with NADH to produce FMN. Requires the flavin reductase RutF to regenerate FMN in vivo. The sequence is that of Pyrimidine monooxygenase RutA from Pseudomonas savastanoi pv. phaseolicola (strain 1448A / Race 6) (Pseudomonas syringae pv. phaseolicola (strain 1448A / Race 6)).